The sequence spans 364 residues: Coproporphyrin III ferrochelatase (364 aa).

Residues Arg29 and Tyr118 each contribute to the Fe-coproporphyrin III site. Residues His169 and Glu250 each contribute to the Fe(2+) site.

It belongs to the ferrochelatase family.

It localises to the cytoplasm. The catalysed reaction is Fe-coproporphyrin III + 2 H(+) = coproporphyrin III + Fe(2+). It functions in the pathway porphyrin-containing compound metabolism; protoheme biosynthesis. In terms of biological role, involved in coproporphyrin-dependent heme b biosynthesis. Catalyzes the insertion of ferrous iron into coproporphyrin III to form Fe-coproporphyrin III. This Streptococcus pneumoniae serotype 4 (strain ATCC BAA-334 / TIGR4) protein is Coproporphyrin III ferrochelatase.